The chain runs to 681 residues: Methionine--tRNA ligase (681 aa).

A 'HIGH' region motif is present at residues 18 to 28 (PYANGSIHLGH). Zn(2+) contacts are provided by C149, C152, C162, and C165. The 'KMSKS' region motif lies at 334 to 338 (KMSKS). ATP is bound at residue K337. Residues 580–681 (DFAKLDLRIV…NGAEPGQRVS (102 aa)) form the tRNA-binding domain.

Belongs to the class-I aminoacyl-tRNA synthetase family. MetG type 1 subfamily. As to quaternary structure, homodimer. Zn(2+) is required as a cofactor.

Its subcellular location is the cytoplasm. It carries out the reaction tRNA(Met) + L-methionine + ATP = L-methionyl-tRNA(Met) + AMP + diphosphate. In terms of biological role, is required not only for elongation of protein synthesis but also for the initiation of all mRNA translation through initiator tRNA(fMet) aminoacylation. This is Methionine--tRNA ligase from Chromohalobacter salexigens (strain ATCC BAA-138 / DSM 3043 / CIP 106854 / NCIMB 13768 / 1H11).